The following is a 293-amino-acid chain: 4-hydroxybenzoate octaprenyltransferase (293 aa).

8 consecutive transmembrane segments (helical) span residues 26–46, 49–69, 102–122, 148–168, 173–193, 217–237, 240–260, and 272–292; these read IGTL…AKGM, IKVL…GCII, LFAL…PLVV, FLGI…LGEV, WWLF…YAMI, WIAV…LSAE, FIYA…QRLI, and FLNN…DYLL.

It belongs to the UbiA prenyltransferase family. Mg(2+) serves as cofactor.

It localises to the cell inner membrane. The catalysed reaction is all-trans-octaprenyl diphosphate + 4-hydroxybenzoate = 4-hydroxy-3-(all-trans-octaprenyl)benzoate + diphosphate. The protein operates within cofactor biosynthesis; ubiquinone biosynthesis. In terms of biological role, catalyzes the prenylation of para-hydroxybenzoate (PHB) with an all-trans polyprenyl group. Mediates the second step in the final reaction sequence of ubiquinone-8 (UQ-8) biosynthesis, which is the condensation of the polyisoprenoid side chain with PHB, generating the first membrane-bound Q intermediate 3-octaprenyl-4-hydroxybenzoate. This is 4-hydroxybenzoate octaprenyltransferase from Shewanella denitrificans (strain OS217 / ATCC BAA-1090 / DSM 15013).